The following is a 471-amino-acid chain: Anthocyanidin 3-O-glucosyltransferase (471 aa).

Residue His-24 is the Proton acceptor of the active site. His-24 contacts an anthocyanidin. Asp-130 functions as the Charge relay in the catalytic mechanism. Thr-152 contacts UDP-alpha-D-glucose. Position 161 (His-161) interacts with an anthocyanidin. The UDP-alpha-D-glucose site is built by Ala-352, Gln-354, His-369, Trp-372, Ser-374, and Glu-377. Gly-392 contributes to the an anthocyanidin binding site. 2 residues coordinate UDP-alpha-D-glucose: Asp-393 and Gln-394.

Belongs to the UDP-glycosyltransferase family.

The enzyme catalyses an anthocyanidin + UDP-alpha-D-glucose + H(+) = an anthocyanidin 3-O-beta-D-glucoside + UDP. The protein operates within pigment biosynthesis; anthocyanin biosynthesis. In terms of biological role, in the presence of other necessary color factors, this glycosylation reaction allows the accumulation of anthocyanin pigments. This chain is Anthocyanidin 3-O-glucosyltransferase (BZ1), found in Zea mays (Maize).